A 239-amino-acid chain; its full sequence is DNA repair protein RecO (239 aa).

This sequence belongs to the RecO family.

Involved in DNA repair and RecF pathway recombination. This chain is DNA repair protein RecO, found in Cereibacter sphaeroides (strain ATCC 17029 / ATH 2.4.9) (Rhodobacter sphaeroides).